We begin with the raw amino-acid sequence, 164 residues long: ATP synthase subunit b (164 aa).

Residues 5–25 form a helical membrane-spanning segment; the sequence is IGELIGNFILVAGSFLLLIVL.

The protein belongs to the ATPase B chain family. F-type ATPases have 2 components, F(1) - the catalytic core - and F(0) - the membrane proton channel. F(1) has five subunits: alpha(3), beta(3), gamma(1), delta(1), epsilon(1). F(0) has three main subunits: a(1), b(2) and c(10-14). The alpha and beta chains form an alternating ring which encloses part of the gamma chain. F(1) is attached to F(0) by a central stalk formed by the gamma and epsilon chains, while a peripheral stalk is formed by the delta and b chains.

It localises to the cell membrane. In terms of biological role, f(1)F(0) ATP synthase produces ATP from ADP in the presence of a proton or sodium gradient. F-type ATPases consist of two structural domains, F(1) containing the extramembraneous catalytic core and F(0) containing the membrane proton channel, linked together by a central stalk and a peripheral stalk. During catalysis, ATP synthesis in the catalytic domain of F(1) is coupled via a rotary mechanism of the central stalk subunits to proton translocation. Its function is as follows. Component of the F(0) channel, it forms part of the peripheral stalk, linking F(1) to F(0). This Streptococcus gordonii (strain Challis / ATCC 35105 / BCRC 15272 / CH1 / DL1 / V288) protein is ATP synthase subunit b.